Here is a 388-residue protein sequence, read N- to C-terminus: Succinate--CoA ligase [ADP-forming] subunit beta (388 aa).

An ATP-grasp domain is found at 9 to 244 (KALFAEYGLP…PSQDDAREAH (236 aa)). ATP-binding positions include lysine 46, 53–55 (GRG), glutamate 99, threonine 102, and glutamate 107. Residues asparagine 199 and aspartate 213 each coordinate Mg(2+). Residues asparagine 264 and 321–323 (GIV) contribute to the substrate site.

This sequence belongs to the succinate/malate CoA ligase beta subunit family. Heterotetramer of two alpha and two beta subunits. Mg(2+) serves as cofactor.

It carries out the reaction succinate + ATP + CoA = succinyl-CoA + ADP + phosphate. The enzyme catalyses GTP + succinate + CoA = succinyl-CoA + GDP + phosphate. It participates in carbohydrate metabolism; tricarboxylic acid cycle; succinate from succinyl-CoA (ligase route): step 1/1. Its function is as follows. Succinyl-CoA synthetase functions in the citric acid cycle (TCA), coupling the hydrolysis of succinyl-CoA to the synthesis of either ATP or GTP and thus represents the only step of substrate-level phosphorylation in the TCA. The beta subunit provides nucleotide specificity of the enzyme and binds the substrate succinate, while the binding sites for coenzyme A and phosphate are found in the alpha subunit. In Shewanella amazonensis (strain ATCC BAA-1098 / SB2B), this protein is Succinate--CoA ligase [ADP-forming] subunit beta.